The chain runs to 750 residues: 5-methyltetrahydropteroyltriglutamate--homocysteine methyltransferase (750 aa).

5-methyltetrahydropteroyltri-L-glutamate is bound by residues 15–18 and K114; that span reads RELK. L-homocysteine contacts are provided by residues 425–427 and E478; that span reads IGS. L-methionine-binding positions include 425–427 and E478; that span reads IGS. Residue W555 participates in 5-methyltetrahydropteroyltri-L-glutamate binding. D593 contacts L-homocysteine. D593 contacts L-methionine. Position 599 (E599) interacts with 5-methyltetrahydropteroyltri-L-glutamate. Residues H636, C638, and E660 each coordinate Zn(2+). H689 acts as the Proton donor in catalysis. C721 is a binding site for Zn(2+).

The protein belongs to the vitamin-B12 independent methionine synthase family. Requires Zn(2+) as cofactor.

It carries out the reaction 5-methyltetrahydropteroyltri-L-glutamate + L-homocysteine = tetrahydropteroyltri-L-glutamate + L-methionine. It functions in the pathway amino-acid biosynthesis; L-methionine biosynthesis via de novo pathway; L-methionine from L-homocysteine (MetE route): step 1/1. Its function is as follows. Catalyzes the transfer of a methyl group from 5-methyltetrahydrofolate to homocysteine resulting in methionine formation. The sequence is that of 5-methyltetrahydropteroyltriglutamate--homocysteine methyltransferase from Streptococcus sanguinis (strain SK36).